The chain runs to 274 residues: Large ribosomal subunit protein uL2cy (274 aa).

Disordered regions lie at residues 1 to 25 and 223 to 274; these read MAIH…VKSN and MNPV…RRSK. Polar residues predominate over residues 7-25; it reads KTSTPSTRNGTVDSQVKSN.

It belongs to the universal ribosomal protein uL2 family. In terms of assembly, part of the 50S ribosomal subunit.

The protein localises to the plastid. It is found in the chloroplast. The chain is Large ribosomal subunit protein uL2cy (rpl2-B) from Atropa belladonna (Belladonna).